Reading from the N-terminus, the 490-residue chain is Cheilanthifoline synthase (490 aa).

Residues 2 to 22 form a helical membrane-spanning segment; it reads EESLWVVTATVVVVFAIAKLL. Cysteine 432 is a heme binding site.

Belongs to the cytochrome P450 family. Heme is required as a cofactor. In terms of tissue distribution, expressed in roots. Detected in leaves and stems.

Its subcellular location is the endoplasmic reticulum membrane. The enzyme catalyses (S)-scoulerine + reduced [NADPH--hemoprotein reductase] + O2 = (S)-cheilanthifoline + oxidized [NADPH--hemoprotein reductase] + 2 H2O + H(+). It functions in the pathway alkaloid biosynthesis. Functionally, methylenedioxy bridge-forming cytochrome P450 involved in the biosynthesis of isoquinoline alkaloids. Converts (S)-scoulerine into (R,S)-cheilanthifoline. Catalyzes an oxidative reaction that does not incorporate oxygen into the product. The protein is Cheilanthifoline synthase (CYP719A5) of Eschscholzia californica (California poppy).